The sequence spans 1334 residues: Rho1 guanine nucleotide exchange factor 1 (1334 aa).

4 disordered regions span residues 1–89, 135–182, 203–245, and 381–402; these read MDYR…ASPV, PQVS…SDSV, LDQN…TSGT, and SLINDRSSTTTPTFVNSEASSP. Residues 138–149 are compositionally biased toward low complexity; the sequence is SNHAPNNSNSPS. Polar residues predominate over residues 150-164; the sequence is LTWHTSSGDDSNQNP. Low complexity predominate over residues 170-180; that stretch reads QSQSSTSPVSD. 3 stretches are compositionally biased toward polar residues: residues 213–227, 234–245, and 381–400; these read VRSSKNPFLSSNSRL, HTVGSHSFTSGT, and SLINDRSSTTTPTFVNSEAS. Ser-381 carries the phosphoserine modification. Residues 621-808 enclose the DH domain; the sequence is KRQEVICEVI…RGFLSRLNVE (188 aa). The 131-residue stretch at 843 to 973 folds into the PH domain; sequence QLIFKGPLKK…WLEHIDNQQT (131 aa). A CNH domain is found at 995–1293; it reads DNKVNAIGVY…RLLADGRGKL (299 aa).

It localises to the cytoplasm. Its function is as follows. Stimulates the exchange of Rho1 and Rho5 GDP-bound form into GTP-bound form. Controls septum formation, cell wall synthesis and localization of F-actin patches. Coordinates actin deposition with cell wall biosynthesis during bipolar growth. The chain is Rho1 guanine nucleotide exchange factor 1 (rgf1) from Schizosaccharomyces pombe (strain 972 / ATCC 24843) (Fission yeast).